The sequence spans 86 residues: Cytochrome c6 (86 aa).

Heme c-binding residues include Cys-14, Cys-17, His-18, and Met-58.

The protein belongs to the cytochrome c family. PetJ subfamily. Monomer. Binds 1 heme c group covalently per subunit.

It is found in the plastid. Its subcellular location is the chloroplast thylakoid lumen. Functions as an electron carrier between membrane-bound cytochrome b6-f and photosystem I in oxygenic photosynthesis. This is Cytochrome c6 (petJ) from Bumilleriopsis filiformis (Yellow-green alga).